Here is a 620-residue protein sequence, read N- to C-terminus: Glutathione-regulated potassium-efflux system protein KefC (620 aa).

Helical transmembrane passes span 4 to 24 (HTLIQALIYLGSAALIVPIAV), 26 to 46 (LGLGSVLGYLIAGCIIGPWGL), 54 to 74 (SILHFAEIGVVLMLFIIGLEL), 90 to 110 (GALQMVICGGLLGLFCMLLGL), 114 to 134 (VAELIGMTLALSSTAIAMQAM), 149 to 169 (FAVLLFQDIAAIPLVAMIPLL), 178 to 198 (MGAFALSALKVAGALVLVVLL), 218 to 238 (VFSAVALFLVFGFGLLLEEVG), 270 to 290 (GLLLGLFFIGVGMSIDFGTLL), 294 to 314 (LRIVILLLGFLIIKIAMLWLI), 327 to 347 (WFAVLLGQGSEFAFVVFGTAQ), and 359 to 379 (SLTLAVALSMAATPILLVILN). In terms of domain architecture, RCK N-terminal spans 399 to 518 (QPRVIIAGFG…AGVEKPERET (120 aa)). The tract at residues 597–620 (GWQGTEEGKHTGNMADEPETKPSS) is disordered.

The protein belongs to the monovalent cation:proton antiporter 2 (CPA2) transporter (TC 2.A.37) family. KefC subfamily. Homodimer. Interacts with the regulatory subunit KefF.

Its subcellular location is the cell inner membrane. In terms of biological role, pore-forming subunit of a potassium efflux system that confers protection against electrophiles. Catalyzes K(+)/H(+) antiport. In Shigella sonnei (strain Ss046), this protein is Glutathione-regulated potassium-efflux system protein KefC.